The chain runs to 290 residues: 4-hydroxy-tetrahydrodipicolinate synthase (290 aa).

Threonine 44 is a pyruvate binding site. Catalysis depends on tyrosine 132, which acts as the Proton donor/acceptor. Lysine 160 functions as the Schiff-base intermediate with substrate in the catalytic mechanism. A pyruvate-binding site is contributed by isoleucine 202.

It belongs to the DapA family. As to quaternary structure, homotetramer; dimer of dimers.

It localises to the cytoplasm. It carries out the reaction L-aspartate 4-semialdehyde + pyruvate = (2S,4S)-4-hydroxy-2,3,4,5-tetrahydrodipicolinate + H2O + H(+). Its pathway is amino-acid biosynthesis; L-lysine biosynthesis via DAP pathway; (S)-tetrahydrodipicolinate from L-aspartate: step 3/4. Functionally, catalyzes the condensation of (S)-aspartate-beta-semialdehyde [(S)-ASA] and pyruvate to 4-hydroxy-tetrahydrodipicolinate (HTPA). The polypeptide is 4-hydroxy-tetrahydrodipicolinate synthase (Geotalea daltonii (strain DSM 22248 / JCM 15807 / FRC-32) (Geobacter daltonii)).